The chain runs to 964 residues: SKI family transcriptional corepressor 1 (964 aa).

6 disordered regions span residues threonine 45–leucine 72, arginine 278–alanine 365, alanine 414–glycine 452, alanine 525–serine 587, arginine 610–alanine 766, and tyrosine 793–leucine 842. Gly residues predominate over residues glutamine 283–cysteine 310. Residues alanine 345–proline 355 are compositionally biased toward low complexity. Gly residues-rich tracts occupy residues alanine 356 to alanine 365 and proline 417 to alanine 440. Over residues serine 571–alanine 583 the composition is skewed to pro residues. Acidic residues predominate over residues aspartate 652–valine 661. The span at glutamate 798–histidine 808 shows a compositional bias: basic and acidic residues. Residues aspartate 823–asparagine 834 show a composition bias toward polar residues. Residues glutamate 857–glutamate 921 are a coiled coil.

Belongs to the SKI family. As to quaternary structure, interacts with LBX1. Interacts with SMAD1, SMAD2 and SMAD3.

Its subcellular location is the nucleus. Inhibits BMP signaling. Acts as a transcriptional corepressor of LBX1. The chain is SKI family transcriptional corepressor 1 (Skor1) from Rattus norvegicus (Rat).